Reading from the N-terminus, the 53-residue chain is Kunitz-type trypsin inhibitor alpha chain (53 aa).

Residues Gly33 to Arg53 are disordered.

The protein belongs to the protease inhibitor I3 (leguminous Kunitz-type inhibitor) family. Heterodimer of an alpha and a beta chain linked by a disulfide bond.

Its function is as follows. Inhibits trypsin with a Ki of 0.25 uM. Inhibits the trypsin-like proteases in midguts of larval H.armigera, S.exigua, and P.rapae. The protein is Kunitz-type trypsin inhibitor alpha chain of Albizia kalkora (Kalkora mimosa).